Consider the following 534-residue polypeptide: Serine/threonine-protein phosphatase 2B catalytic subunit (534 aa).

The Fe cation site is built by Asp-88, His-90, and Asp-116. Zn(2+)-binding residues include Asp-116 and Asn-148. The active-site Proton donor is the His-149. Residues His-197 and His-279 each contribute to the Zn(2+) site. 2 disordered regions span residues 375–398 (LEDE…DVES) and 475–534 (PSHE…TREA). Composition is skewed to basic and acidic residues over residues 475-497 (PSHE…RAQQ) and 524-534 (QRDAARETREA).

Belongs to the PPP phosphatase family. PP-2B subfamily. Composed of two components (A and B), the A component is the catalytic subunit and the B component confers calcium sensitivity. The cofactor is Fe(3+). Requires Zn(2+) as cofactor.

It carries out the reaction O-phospho-L-seryl-[protein] + H2O = L-seryl-[protein] + phosphate. The enzyme catalyses O-phospho-L-threonyl-[protein] + H2O = L-threonyl-[protein] + phosphate. In terms of biological role, calcium-dependent, calmodulin-stimulated protein phosphatase. This subunit may have a role in the calmodulin activation of calcineurin. The polypeptide is Serine/threonine-protein phosphatase 2B catalytic subunit (cnaA) (Aspergillus fumigatus (strain ATCC MYA-4609 / CBS 101355 / FGSC A1100 / Af293) (Neosartorya fumigata)).